The chain runs to 500 residues: NAD(P)H-quinone oxidoreductase chain 4, chloroplastic (500 aa).

Transmembrane regions (helical) follow at residues 4–24, 37–57, 87–107, 113–130, 134–154, 167–187, 208–228, 242–262, 272–292, 305–325, 330–350, 386–406, 416–436, and 462–482; these read FPWLTLIVVLPISAGSLIFFL, IFICMLELLLTTYVFCYHFQL, IGPILLTGFITTLATLAAWPV, LFHFLMLAMYSGQIGSFS, LLLFFIMWELELIPVYLLLSM, FILYTAGGSIFLLLGVLGIGL, ALEIIFYIGFFIAFAVKSPII, HYSTCMLLAGILLKMGAYGLV, AHSIFSPWLVVVGTMQIIYAA, IAYSSVSHMGFIIIGIGSITD, GAILQIISHGFLGAALFFLAG, LALPGMSGFVAELIVFFGIIT, ILITFVMAIGMILTPIYSLSM, and LFVLISIFLPVIGIGIYPDFV.

It belongs to the complex I subunit 4 family.

It localises to the plastid. The protein resides in the chloroplast thylakoid membrane. The enzyme catalyses a plastoquinone + NADH + (n+1) H(+)(in) = a plastoquinol + NAD(+) + n H(+)(out). It catalyses the reaction a plastoquinone + NADPH + (n+1) H(+)(in) = a plastoquinol + NADP(+) + n H(+)(out). The polypeptide is NAD(P)H-quinone oxidoreductase chain 4, chloroplastic (Vitis vinifera (Grape)).